The following is a 453-amino-acid chain: Tol-Pal system protein TolB (453 aa).

The first 39 residues, 1 to 39 (MSFIPNTEAEALSALFSRRSVLGATAAGGLLATPLAAFA), serve as a signal peptide directing secretion.

The protein belongs to the TolB family. As to quaternary structure, the Tol-Pal system is composed of five core proteins: the inner membrane proteins TolA, TolQ and TolR, the periplasmic protein TolB and the outer membrane protein Pal. They form a network linking the inner and outer membranes and the peptidoglycan layer.

Its subcellular location is the periplasm. Functionally, part of the Tol-Pal system, which plays a role in outer membrane invagination during cell division and is important for maintaining outer membrane integrity. This chain is Tol-Pal system protein TolB, found in Gluconobacter oxydans (strain 621H) (Gluconobacter suboxydans).